Here is a 36-residue protein sequence, read N- to C-terminus: Mu-agatoxin-Aa1a (36 aa).

Disulfide bonds link cysteine 2–cysteine 17, cysteine 9–cysteine 22, cysteine 16–cysteine 32, and cysteine 24–cysteine 30. Asparagine 36 carries the post-translational modification Asparagine amide.

Belongs to the neurotoxin 07 (Beta/delta-agtx) family. 04 (aga-5) subfamily. As to expression, expressed by the venom gland.

It localises to the secreted. In terms of biological role, insecticidal neurotoxin that induces an irreversible spastic paralysis when injected into insects. Modifies presynaptic voltage-gated sodium channels (Nav), causing them to open at the normal resting potential of the nerve. This leads to spontaneous release of neurotransmitter and repetitive action potentials in motor neurons. This chain is Mu-agatoxin-Aa1a, found in Agelenopsis aperta (North American funnel-web spider).